The sequence spans 522 residues: Subtilisin-like protease 10 (522 aa).

Positions 1–19 (MFFFKGVVAVLSFFSAVNA) are cleaved as a signal peptide. The propeptide occupies 20–117 (APFMKPNNGT…VERDQIGTSQ (98 aa)). The Inhibitor I9 domain occupies 36-113 (SYIVLLKRDI…HVAHVERDQI (78 aa)). A Peptidase S8 domain is found at 127–405 (NWGLGRLSNN…KLLVNGANGT (279 aa)). Residues D159 and H190 each act as charge relay system in the active site. N251 carries an N-linked (GlcNAc...) asparagine glycan. Catalysis depends on S348, which acts as the Charge relay system. The segment covering 384–397 (ASVKNPGPNTTNKL) has biased composition (polar residues). Residues 384 to 515 (ASVKNPGPNT…GWNRPMWWNR (132 aa)) are disordered. N-linked (GlcNAc...) asparagine glycans are attached at residues N392 and N403. Positions 432-459 (SQNPPPGQNPPPGQNPPPEQPAPSPPAN) are enriched in pro residues.

This sequence belongs to the peptidase S8 family.

It is found in the secreted. Functionally, secreted subtilisin-like serine protease with keratinolytic activity that contributes to pathogenicity. This is Subtilisin-like protease 10 (SUB10) from Arthroderma benhamiae (strain ATCC MYA-4681 / CBS 112371) (Trichophyton mentagrophytes).